Reading from the N-terminus, the 429-residue chain is Ribosomal RNA small subunit methyltransferase B (429 aa).

S-adenosyl-L-methionine-binding positions include 254 to 260 (CAAPGGK), aspartate 277, aspartate 303, and aspartate 322. Cysteine 375 functions as the Nucleophile in the catalytic mechanism. The interval 397–419 (ALSETGTPDQPGQQNLPGGEEGD) is disordered. A compositionally biased stretch (polar residues) spans 400-412 (ETGTPDQPGQQNL).

Belongs to the class I-like SAM-binding methyltransferase superfamily. RsmB/NOP family.

It is found in the cytoplasm. The enzyme catalyses cytidine(967) in 16S rRNA + S-adenosyl-L-methionine = 5-methylcytidine(967) in 16S rRNA + S-adenosyl-L-homocysteine + H(+). Functionally, specifically methylates the cytosine at position 967 (m5C967) of 16S rRNA. This Salmonella typhi protein is Ribosomal RNA small subunit methyltransferase B.